A 49-amino-acid polypeptide reads, in one-letter code: Large ribosomal subunit protein bL33A (49 aa).

This sequence belongs to the bacterial ribosomal protein bL33 family.

This chain is Large ribosomal subunit protein bL33A, found in Limosilactobacillus reuteri subsp. reuteri (strain JCM 1112) (Lactobacillus reuteri).